The chain runs to 364 residues: Mannitol-1-phosphate 5-dehydrogenase (364 aa).

Residue 6 to 17 coordinates NAD(+); the sequence is VLHFGAGNIGRG.

Belongs to the mannitol dehydrogenase family.

It catalyses the reaction D-mannitol 1-phosphate + NAD(+) = beta-D-fructose 6-phosphate + NADH + H(+). The protein is Mannitol-1-phosphate 5-dehydrogenase (mtlD) of Mycoplasma pneumoniae (strain ATCC 29342 / M129 / Subtype 1) (Mycoplasmoides pneumoniae).